The sequence spans 505 residues: Probable cytosol aminopeptidase (505 aa).

Lysine 269 and aspartate 274 together coordinate Mn(2+). Lysine 281 is an active-site residue. Mn(2+) contacts are provided by aspartate 292, aspartate 351, and glutamate 353. Arginine 355 is a catalytic residue.

The protein belongs to the peptidase M17 family. It depends on Mn(2+) as a cofactor.

It is found in the cytoplasm. It catalyses the reaction Release of an N-terminal amino acid, Xaa-|-Yaa-, in which Xaa is preferably Leu, but may be other amino acids including Pro although not Arg or Lys, and Yaa may be Pro. Amino acid amides and methyl esters are also readily hydrolyzed, but rates on arylamides are exceedingly low.. The enzyme catalyses Release of an N-terminal amino acid, preferentially leucine, but not glutamic or aspartic acids.. Presumably involved in the processing and regular turnover of intracellular proteins. Catalyzes the removal of unsubstituted N-terminal amino acids from various peptides. The protein is Probable cytosol aminopeptidase of Rhodococcus opacus (strain B4).